Consider the following 305-residue polypeptide: Aspartate carbamoyltransferase catalytic subunit (305 aa).

Residues Arg-53 and Thr-54 each contribute to the carbamoyl phosphate site. Lys-82 provides a ligand contact to L-aspartate. Carbamoyl phosphate is bound by residues Arg-103, His-131, and Gln-134. Positions 164 and 226 each coordinate L-aspartate. Leu-265 and Pro-266 together coordinate carbamoyl phosphate.

Belongs to the aspartate/ornithine carbamoyltransferase superfamily. ATCase family. In terms of assembly, heterooligomer of catalytic and regulatory chains.

The enzyme catalyses carbamoyl phosphate + L-aspartate = N-carbamoyl-L-aspartate + phosphate + H(+). Its pathway is pyrimidine metabolism; UMP biosynthesis via de novo pathway; (S)-dihydroorotate from bicarbonate: step 2/3. Functionally, catalyzes the condensation of carbamoyl phosphate and aspartate to form carbamoyl aspartate and inorganic phosphate, the committed step in the de novo pyrimidine nucleotide biosynthesis pathway. The polypeptide is Aspartate carbamoyltransferase catalytic subunit (Ignicoccus hospitalis (strain KIN4/I / DSM 18386 / JCM 14125)).